The following is a 246-amino-acid chain: tRNA (guanine-N(7)-)-methyltransferase (246 aa).

S-adenosyl-L-methionine contacts are provided by glutamate 77, glutamate 102, aspartate 129, and aspartate 152. Residue aspartate 152 is part of the active site. Substrate is bound by residues lysine 156, aspartate 188, and 225 to 228 (TKFE).

Belongs to the class I-like SAM-binding methyltransferase superfamily. TrmB family.

The enzyme catalyses guanosine(46) in tRNA + S-adenosyl-L-methionine = N(7)-methylguanosine(46) in tRNA + S-adenosyl-L-homocysteine. Its pathway is tRNA modification; N(7)-methylguanine-tRNA biosynthesis. In terms of biological role, catalyzes the formation of N(7)-methylguanine at position 46 (m7G46) in tRNA. This is tRNA (guanine-N(7)-)-methyltransferase from Haemophilus influenzae (strain PittEE).